A 313-amino-acid chain; its full sequence is DNA-directed RNA polymerase subunit alpha (313 aa).

Positions 1–227 (MMLDVAPPRF…DFFGLFAEGY (227 aa)) are alpha N-terminal domain (alpha-NTD). Residues 242–313 (RPVITDERPI…YGYTLESGRE (72 aa)) are alpha C-terminal domain (alpha-CTD).

The protein belongs to the RNA polymerase alpha chain family. Homodimer. The RNAP catalytic core consists of 2 alpha, 1 beta, 1 beta' and 1 omega subunit. When a sigma factor is associated with the core the holoenzyme is formed, which can initiate transcription.

It catalyses the reaction RNA(n) + a ribonucleoside 5'-triphosphate = RNA(n+1) + diphosphate. In terms of biological role, DNA-dependent RNA polymerase catalyzes the transcription of DNA into RNA using the four ribonucleoside triphosphates as substrates. This chain is DNA-directed RNA polymerase subunit alpha, found in Rubrobacter xylanophilus (strain DSM 9941 / JCM 11954 / NBRC 16129 / PRD-1).